The sequence spans 231 residues: UMP-CMP kinase (231 aa).

57–62 contributes to the ATP binding site; sequence GSGKGT. An NMP region spans residues 77–106; sequence SAGDLLRREIASGSAYGSVILSTIREGKIV. Residues arginine 83, 104-106, and 131-134 each bind a ribonucleoside 5'-phosphate; these read KIV and GFPR. Asparagine 138 serves as a coordination point for CMP. Residues 169–177 are LID; it reads NRNQGRVDD. Arginine 170 serves as a coordination point for ATP. Residues arginine 174 and arginine 185 each contribute to the a ribonucleoside 5'-phosphate site. Glycine 213 is an ATP binding site.

The protein belongs to the adenylate kinase family. UMP-CMP kinase subfamily. In terms of assembly, monomer. Mg(2+) serves as cofactor.

It is found in the cytoplasm. The protein localises to the nucleus. The enzyme catalyses CMP + ATP = CDP + ADP. It catalyses the reaction dCMP + ATP = dCDP + ADP. It carries out the reaction UMP + ATP = UDP + ADP. Functionally, catalyzes the phosphorylation of pyrimidine nucleoside monophosphates at the expense of ATP. Plays an important role in de novo pyrimidine nucleotide biosynthesis. Has preference for UMP and CMP as phosphate acceptors. The chain is UMP-CMP kinase from Prunus armeniaca (Apricot).